The primary structure comprises 335 residues: Ornithine carbamoyltransferase (335 aa).

Carbamoyl phosphate contacts are provided by residues 56–59, Q83, R107, and 134–137; these read STRT and HPTQ. L-ornithine is bound by residues N168, D232, and 236–237; that span reads SM. Carbamoyl phosphate contacts are provided by residues 274–275 and R320; that span reads CL.

It belongs to the aspartate/ornithine carbamoyltransferase superfamily. OTCase family.

It localises to the cytoplasm. The catalysed reaction is carbamoyl phosphate + L-ornithine = L-citrulline + phosphate + H(+). Its pathway is amino-acid biosynthesis; L-arginine biosynthesis; L-arginine from L-ornithine and carbamoyl phosphate: step 1/3. Reversibly catalyzes the transfer of the carbamoyl group from carbamoyl phosphate (CP) to the N(epsilon) atom of ornithine (ORN) to produce L-citrulline. The chain is Ornithine carbamoyltransferase from Yersinia pestis bv. Antiqua (strain Nepal516).